Reading from the N-terminus, the 170-residue chain is Putative calmodulin-like protein 6 (170 aa).

EF-hand domains are found at residues 8 to 43, 44 to 79, 84 to 119, and 120 to 155; these read QQIS…LGMA, PSQE…KLYE, DDEE…LGEE, and MTED…TWNI. Asp21, Asn23, Asp25, Cys27, Glu32, Asp57, Asp59, Asn61, Thr63, Glu68, Asp97, Asp99, Asn101, Glu108, Asp133, Asn135, Asp137, Gln139, and Glu144 together coordinate Ca(2+).

It belongs to the calmodulin family.

Potential calcium sensor. This is Putative calmodulin-like protein 6 (CML6) from Oryza sativa subsp. japonica (Rice).